The chain runs to 515 residues: Bifunctional purine biosynthesis protein PurH (515 aa).

An MGS-like domain is found at 1–145 (MTKRALISVS…KNHASVTVVV (145 aa)).

The protein belongs to the PurH family.

It catalyses the reaction (6R)-10-formyltetrahydrofolate + 5-amino-1-(5-phospho-beta-D-ribosyl)imidazole-4-carboxamide = 5-formamido-1-(5-phospho-D-ribosyl)imidazole-4-carboxamide + (6S)-5,6,7,8-tetrahydrofolate. The enzyme catalyses IMP + H2O = 5-formamido-1-(5-phospho-D-ribosyl)imidazole-4-carboxamide. The protein operates within purine metabolism; IMP biosynthesis via de novo pathway; 5-formamido-1-(5-phospho-D-ribosyl)imidazole-4-carboxamide from 5-amino-1-(5-phospho-D-ribosyl)imidazole-4-carboxamide (10-formyl THF route): step 1/1. Its pathway is purine metabolism; IMP biosynthesis via de novo pathway; IMP from 5-formamido-1-(5-phospho-D-ribosyl)imidazole-4-carboxamide: step 1/1. This Streptococcus agalactiae serotype Ia (strain ATCC 27591 / A909 / CDC SS700) protein is Bifunctional purine biosynthesis protein PurH.